Consider the following 96-residue polypeptide: Putative septation protein SpoVG (96 aa).

Belongs to the SpoVG family.

In terms of biological role, could be involved in septation. This is Putative septation protein SpoVG from Clostridium kluyveri (strain ATCC 8527 / DSM 555 / NBRC 12016 / NCIMB 10680 / K1).